Consider the following 632-residue polypeptide: tRNA uridine 5-carboxymethylaminomethyl modification enzyme MnmG (632 aa).

FAD-binding positions include 15–20 (GAGHAG), isoleucine 127, and serine 182. 276–290 (GPRYCPSIEDKIVRF) lines the NAD(+) pocket. Residue glutamine 373 participates in FAD binding.

It belongs to the MnmG family. In terms of assembly, homodimer. Heterotetramer of two MnmE and two MnmG subunits. FAD is required as a cofactor.

It localises to the cytoplasm. Its function is as follows. NAD-binding protein involved in the addition of a carboxymethylaminomethyl (cmnm) group at the wobble position (U34) of certain tRNAs, forming tRNA-cmnm(5)s(2)U34. The chain is tRNA uridine 5-carboxymethylaminomethyl modification enzyme MnmG from Streptococcus pyogenes serotype M6 (strain ATCC BAA-946 / MGAS10394).